The primary structure comprises 330 residues: Bifunctional pinoresinol-lariciresinol reductase 2 (330 aa).

NADP(+) contacts are provided by residues 28 to 34 (GGTGYLG), arginine 53, and lysine 62. Residue lysine 156 is the Proton acceptor of the active site. An NADP(+)-binding site is contributed by arginine 160. Residue histidine 288 coordinates substrate.

It belongs to the NmrA-type oxidoreductase family. Isoflavone reductase subfamily. As to quaternary structure, dimer. Expressed in leaves, stems, leaves and seeds.

It catalyses the reaction (+)-lariciresinol + NADP(+) = (+)-pinoresinol + NADPH + H(+). The enzyme catalyses (-)-secoisolariciresinol + NADP(+) = (+)-lariciresinol + NADPH + H(+). In terms of biological role, reductase involved in lignan biosynthesis. Catalyzes the enantioselective conversion of (+)-pinoresinol into (+)-lariciresinol and of (+)-lariciresinol into (-)-secoisolariciresinol. Abstracts the 4R-hydride from the NADPH cofactor during catalysis. The chain is Bifunctional pinoresinol-lariciresinol reductase 2 (PLR_Lu2) from Linum usitatissimum (Flax).